A 104-amino-acid polypeptide reads, in one-letter code: uncharacterized protein (104 aa).

The protein belongs to the mimivirus L28/L54 family.

This is an uncharacterized protein from Acanthamoeba polyphaga mimivirus (APMV).